Reading from the N-terminus, the 723-residue chain is DNA-binding protein RFX2 (723 aa).

Positions 1 to 46 (MQNSEGGADSPASVALRPSAAAPPVPASPQRVLVQAASSAPKGAQM) are disordered. Residues 10-20 (SPASVALRPSA) are compositionally biased toward low complexity. Position 28 is a phosphoserine (Ser-28). Residues 199-274 (HLQWLLDNYE…YHYYGIRLKP (76 aa)) constitute a DNA-binding region (RFX-type winged-helix). A disordered region spans residues 292–332 (QQPMHQKPRYRPAQKTDSLGDSGSHSSLHSTPEQTMAAQSQ). The segment covering 307–322 (TDSLGDSGSHSSLHST) has biased composition (low complexity). Polar residues predominate over residues 323–332 (PEQTMAAQSQ). The residue at position 416 (Ser-416) is a Phosphoserine. A disordered region spans residues 689-723 (GDERRGSEAGPDAHSLGEPLVKRERSDPNHSLQGI).

Belongs to the RFX family. Homodimer; probably only forms homodimers in testis. Heterodimer; heterodimerizes with RFX1 and RFX3.

The protein localises to the nucleus. Its subcellular location is the cytoplasm. Transcription factor that acts as a key regulator of spermatogenesis. Acts by regulating expression of genes required for the haploid phase during spermiogenesis, such as genes required for cilium assembly and function. Recognizes and binds the X-box, a regulatory motif with DNA sequence 5'-GTNRCC(0-3N)RGYAAC-3' present on promoters. Probably activates transcription of the testis-specific histone gene H1-6. The chain is DNA-binding protein RFX2 (RFX2) from Macaca fascicularis (Crab-eating macaque).